We begin with the raw amino-acid sequence, 726 residues long: Catalase-peroxidase (726 aa).

A cross-link (tryptophyl-tyrosyl-methioninium (Trp-Tyr) (with M-234)) is located at residues 85 to 208 (WHSAGSYRIH…FAATEMGLIY (124 aa)). The Proton acceptor role is filled by H86. A cross-link (tryptophyl-tyrosyl-methioninium (Tyr-Met) (with W-85)) is located at residues 208–234 (YVNPEGPMGNPDPSGSAKEIRLAFTRM). A heme b-binding site is contributed by H249.

It belongs to the peroxidase family. Peroxidase/catalase subfamily. In terms of assembly, homodimer or homotetramer. Requires heme b as cofactor. In terms of processing, formation of the three residue Trp-Tyr-Met cross-link is important for the catalase, but not the peroxidase activity of the enzyme.

The enzyme catalyses H2O2 + AH2 = A + 2 H2O. It carries out the reaction 2 H2O2 = O2 + 2 H2O. In terms of biological role, bifunctional enzyme with both catalase and broad-spectrum peroxidase activity. The polypeptide is Catalase-peroxidase (Pseudothermotoga lettingae (strain ATCC BAA-301 / DSM 14385 / NBRC 107922 / TMO) (Thermotoga lettingae)).